The following is a 445-amino-acid chain: ATP-dependent protease ATPase subunit HslU (445 aa).

Residues Ile17, 59–64, Asp254, Glu319, and Arg391 each bind ATP; that span reads GVGKTE.

This sequence belongs to the ClpX chaperone family. HslU subfamily. In terms of assembly, a double ring-shaped homohexamer of HslV is capped on each side by a ring-shaped HslU homohexamer. The assembly of the HslU/HslV complex is dependent on binding of ATP.

Its subcellular location is the cytoplasm. Functionally, ATPase subunit of a proteasome-like degradation complex; this subunit has chaperone activity. The binding of ATP and its subsequent hydrolysis by HslU are essential for unfolding of protein substrates subsequently hydrolyzed by HslV. HslU recognizes the N-terminal part of its protein substrates and unfolds these before they are guided to HslV for hydrolysis. The polypeptide is ATP-dependent protease ATPase subunit HslU (Pseudomonas syringae pv. tomato (strain ATCC BAA-871 / DC3000)).